The sequence spans 595 residues: O-phosphoseryl-tRNA(Sec) selenium transferase (595 aa).

Arginine 75 contributes to the pyridoxal 5'-phosphate binding site. The interval 96–106 is phosphate loop (P-loop); the sequence is GRSGDLFSEQP. Substrate is bound by residues arginine 97, serine 98, and glutamine 105. Positions 174 to 187 are enriched in polar residues; the sequence is RTVTKDSTSATSAA. 2 disordered regions span residues 174–208 and 257–278; these read RTVTKDSTSATSAAPVQEPPMSEADRDRHDRTSLP and STNRDSLDRGQDSIGSPSTPTS. Basic and acidic residues predominate over residues 196–205; sequence EADRDRHDRT. Arginine 358 provides a ligand contact to tRNA. Position 371 is an N6-(pyridoxal phosphate)lysine (lysine 371). Arginine 400 contributes to the substrate binding site.

It belongs to the SepSecS family. Homotetramer composed of two homodimers. Requires pyridoxal 5'-phosphate as cofactor.

The protein localises to the cytoplasm. It catalyses the reaction O-phospho-L-seryl-tRNA(Sec) + selenophosphate + H2O = L-selenocysteinyl-tRNA(Sec) + 2 phosphate. The protein operates within aminoacyl-tRNA biosynthesis; selenocysteinyl-tRNA(Sec) biosynthesis; selenocysteinyl-tRNA(Sec) from L-seryl-tRNA(Sec) (archaeal/eukaryal route): step 2/2. Converts O-phosphoseryl-tRNA(Sec) to selenocysteinyl-tRNA(Sec) required for selenoprotein biosynthesis. The protein is O-phosphoseryl-tRNA(Sec) selenium transferase of Leishmania donovani.